A 203-amino-acid polypeptide reads, in one-letter code: FMN-dependent NADH:quinone oxidoreductase (203 aa).

FMN is bound by residues Ser9, 15–17 (SVS), and 138–141 (SRGG).

Belongs to the azoreductase type 1 family. In terms of assembly, homodimer. It depends on FMN as a cofactor.

The catalysed reaction is 2 a quinone + NADH + H(+) = 2 a 1,4-benzosemiquinone + NAD(+). The enzyme catalyses N,N-dimethyl-1,4-phenylenediamine + anthranilate + 2 NAD(+) = 2-(4-dimethylaminophenyl)diazenylbenzoate + 2 NADH + 2 H(+). Quinone reductase that provides resistance to thiol-specific stress caused by electrophilic quinones. In terms of biological role, also exhibits azoreductase activity. Catalyzes the reductive cleavage of the azo bond in aromatic azo compounds to the corresponding amines. The chain is FMN-dependent NADH:quinone oxidoreductase from Methylorubrum extorquens (strain PA1) (Methylobacterium extorquens).